Here is a 252-residue protein sequence, read N- to C-terminus: 7-cyano-7-deazaguanine synthase (252 aa).

22 to 32 provides a ligand contact to ATP; that stretch reads FSGGQDSTTCL. Zn(2+) contacts are provided by C215, C230, C233, and C236.

The protein belongs to the QueC family. It depends on Zn(2+) as a cofactor.

The catalysed reaction is 7-carboxy-7-deazaguanine + NH4(+) + ATP = 7-cyano-7-deazaguanine + ADP + phosphate + H2O + H(+). Its pathway is purine metabolism; 7-cyano-7-deazaguanine biosynthesis. In terms of biological role, catalyzes the ATP-dependent conversion of 7-carboxy-7-deazaguanine (CDG) to 7-cyano-7-deazaguanine (preQ(0)). This Granulibacter bethesdensis (strain ATCC BAA-1260 / CGDNIH1) protein is 7-cyano-7-deazaguanine synthase.